A 1399-amino-acid chain; its full sequence is DNA-directed RNA polymerase subunit beta' (1399 aa).

Residues Cys70, Cys72, Cys85, and Cys88 each coordinate Zn(2+). Mg(2+) is bound by residues Asp460, Asp462, and Asp464. Cys814, Cys888, Cys895, and Cys898 together coordinate Zn(2+).

The protein belongs to the RNA polymerase beta' chain family. In terms of assembly, the RNAP catalytic core consists of 2 alpha, 1 beta, 1 beta' and 1 omega subunit. When a sigma factor is associated with the core the holoenzyme is formed, which can initiate transcription. Mg(2+) serves as cofactor. It depends on Zn(2+) as a cofactor.

It catalyses the reaction RNA(n) + a ribonucleoside 5'-triphosphate = RNA(n+1) + diphosphate. Its function is as follows. DNA-dependent RNA polymerase catalyzes the transcription of DNA into RNA using the four ribonucleoside triphosphates as substrates. In Pseudomonas syringae pv. syringae (strain B728a), this protein is DNA-directed RNA polymerase subunit beta'.